Consider the following 23-residue polypeptide: Defensin-like protein 2 (23 aa).

A Pyrrolidone carboxylic acid modification is found at Q1.

It belongs to the DEFL family. Forms oligomers in its native state.

Possesses antifungal activity sensitive to inorganic cations. This Brassica napus (Rape) protein is Defensin-like protein 2.